A 376-amino-acid chain; its full sequence is uncharacterized protein (376 aa).

Residues 1–280 (MPIPIIAHIA…RTPGFRRVVS (280 aa)) are Lumenal-facing. I66, D115, R178, K233, V270, and T272 together coordinate NADP(+). K233 functions as the Lowers pKa of active site Tyr in the catalytic mechanism. Residues 281 to 301 (FGKVWGLFLYLLLWPFWWLLL) traverse the membrane as a helical segment. The Cytoplasmic segment spans residues 302 to 376 (KGTIHGAQSF…KKKKIKKSKK (75 aa)).

Belongs to the short-chain dehydrogenases/reductases (SDR) family.

The protein localises to the cytoplasm. It localises to the endoplasmic reticulum membrane. In terms of biological role, may be involved in lipid metabolism. This is an uncharacterized protein from Schizosaccharomyces pombe (strain 972 / ATCC 24843) (Fission yeast).